The following is a 423-amino-acid chain: FAD-dependent monooxygenase asL6 (423 aa).

FAD-binding positions include 10-13 (AGVA), 34-35 (ER), arginine 108, tyrosine 290, and aspartate 312. Residues 371 to 391 (GMGMFQSKFGVGVFYVLLAII) form a helical membrane-spanning segment.

Belongs to the aromatic-ring hydroxylase family. FAD serves as cofactor.

Its subcellular location is the membrane. It participates in secondary metabolite biosynthesis; terpenoid biosynthesis. Functionally, FAD-dependent monooxygenase; part of the gene cluster that mediates the biosynthesis of xenovulene A, an unusual meroterpenoid that has potent inhibitory effects on the human gamma-aminobutyrate A (GABAA) benzodiazepine receptor. The first step of xenovulene A biosynthesis is the biosynthesis of 3-methylorcinaldehyde performed by the non-reducing polyketide synthase aspks1. The salicylate hydroxylase asL1 then catalyzes the oxidative dearomatization of 3-methylorcinaldehyde to yield a dearomatized hydroxycyclohexadione. The 2-oxoglutarate-dependent dioxygenase asL3 further catalyzes the oxidative ring expansion to provide the first tropolone metabolite. The cytochrome P450 monooxygenase asR2 allows the synthesis of tropolone hemiacetal. In parallel, a previously unrecognised class of terpene cyclase, asR6, produces alpha-humulene from farnesylpyrophosphate (FPP). The putative Diels-Alderase asR5 probably catalyzes the formation of the tropolone-humulene skeleton by linking humulene and the polyketide moiety. Oxidative-ring contractions catalyzed by asL4 and asL6 then processively remove carbon atoms from the polyketide to yield xenovulene A. The protein is FAD-dependent monooxygenase asL6 of Sarocladium schorii (Acremonium strictum (strain IMI 501407)).